Here is a 703-residue protein sequence, read N- to C-terminus: Calpain-8 (703 aa).

One can recognise a Calpain catalytic domain in the interval 45-344; that stretch reads LFKDPEFPAC…YSRLEICNLS (300 aa). Residues C105, H262, and N286 contribute to the active site. Positions 355–512 are domain III; sequence KWNLVLFNGR…VFSEKKAKAL (158 aa). Residues 513–531 are linker; it reads EIGDTVSGHPHEPHPRDMD. EF-hand domains lie at 532–566, 575–608, 605–640, and 670–703; these read EEDEHVRSLFEEFVGKDSEISANQLKRVLNEVLSK, FNINTCREMISLLDSDGTGSLGPMEFKTLWLKIR, LKIRTYLEIFQEMDHNHVGTIEAHEMRTALKKAGFT, and IRLETLFKLFRLLDKDQNGIVQLSLAEWLCCVLV. Positions 532 to 703 are domain IV; that stretch reads EEDEHVRSLF…LAEWLCCVLV (172 aa). Ca(2+)-binding residues include D588, D590, T592, S594, E599, D618, N620, T624, and E629.

This sequence belongs to the peptidase C2 family. Monomer and homooligomer. Interacts with COPS1/GPS1, COPB1, EYA2, NME2, NME4 and TOMM70. It depends on Ca(2+) as a cofactor. Post-translationally, undergoes autolytic cleavage between Ala-5 and Ala-6 which gives rise to fragments extending from Ala-6 to the C-terminus, Ala-6 to the EF-hand 2 domain and from Ala-6 to the beginning of domain III. Predominantly expressed in the stomach. Localizes strictly to the surface mucus cells in the gastric epithelium and the mucus-secreting goblet cells in the duodenum. Detected in the pituitary after estrogen stimulation.

It is found in the cytoplasm. The protein resides in the golgi apparatus. The enzyme catalyses Broad endopeptidase specificity.. Its function is as follows. Calcium-regulated non-lysosomal thiol-protease. Involved in membrane trafficking in the gastric surface mucus cells (pit cells) and may involve the membrane trafficking of mucus cells via interactions with coat protein. Proteolytically cleaves the beta-subunit of coatomer complex. This Rattus norvegicus (Rat) protein is Calpain-8 (Capn8).